Here is a 160-residue protein sequence, read N- to C-terminus: Dihydrofolate reductase (160 aa).

One can recognise a DHFR domain in the interval 1-160 (MLIAIWAMTQ…NVNYYRKKQQ (160 aa)). 5 to 7 (IWA) contributes to the substrate binding site. NADP(+)-binding positions include 6-7 (WA) and 14-19 (IGNNNT). Glutamate 27 is a substrate binding site. 43 to 46 (GRKT) lines the NADP(+) pocket. Position 57 (arginine 57) interacts with substrate. Residues 62–65 (LSKD) and 101–106 (CGGKSV) each bind NADP(+). Residue serine 120 participates in substrate binding.

The protein belongs to the dihydrofolate reductase family.

The enzyme catalyses (6S)-5,6,7,8-tetrahydrofolate + NADP(+) = 7,8-dihydrofolate + NADPH + H(+). Its pathway is cofactor biosynthesis; tetrahydrofolate biosynthesis; 5,6,7,8-tetrahydrofolate from 7,8-dihydrofolate: step 1/1. Key enzyme in folate metabolism. Catalyzes an essential reaction for de novo glycine and purine synthesis, and for DNA precursor synthesis. This chain is Dihydrofolate reductase (folA), found in Mycoplasma genitalium (strain ATCC 33530 / DSM 19775 / NCTC 10195 / G37) (Mycoplasmoides genitalium).